The following is a 78-amino-acid chain: Translational regulator CsrA (78 aa).

Belongs to the CsrA/RsmA family. In terms of assembly, homodimer; the beta-strands of each monomer intercalate to form a hydrophobic core, while the alpha-helices form wings that extend away from the core.

The protein resides in the cytoplasm. Functionally, a translational regulator that binds mRNA to regulate translation initiation and/or mRNA stability. Usually binds in the 5'-UTR at or near the Shine-Dalgarno sequence preventing ribosome-binding, thus repressing translation. Its main target seems to be the major flagellin gene, while its function is anatagonized by FliW. In Borrelia recurrentis (strain A1), this protein is Translational regulator CsrA.